Reading from the N-terminus, the 153-residue chain is Ubiquitin/ISG15-conjugating enzyme E2 L6 (153 aa).

A UBC core domain is found at 2–149; the sequence is MASMRVVKEL…AEEFTLRFGV (148 aa). Cys86 serves as the catalytic Glycyl thioester intermediate.

It belongs to the ubiquitin-conjugating enzyme family. In terms of assembly, interacts with RNF19A, RNF19B and RNF144B. Interacts with FLT3 (tyrosine phosphorylated). ISGylated. Present in natural killer cells (at protein level).

It carries out the reaction S-ubiquitinyl-[E1 ubiquitin-activating enzyme]-L-cysteine + [E2 ubiquitin-conjugating enzyme]-L-cysteine = [E1 ubiquitin-activating enzyme]-L-cysteine + S-ubiquitinyl-[E2 ubiquitin-conjugating enzyme]-L-cysteine.. Its pathway is protein modification; protein ubiquitination. Catalyzes the covalent attachment of ubiquitin or ISG15 to other proteins. Functions in the E6/E6-AP-induced ubiquitination of p53/TP53. Promotes ubiquitination and subsequent proteasomal degradation of FLT3. The protein is Ubiquitin/ISG15-conjugating enzyme E2 L6 (UBE2L6) of Homo sapiens (Human).